A 334-amino-acid polypeptide reads, in one-letter code: Leucine-rich repeat-containing protein 26 (334 aa).

The signal sequence occupies residues 1-30 (MRGSFFSRLPPQLSLLLLLLLLLSWRRVWT). The Extracellular portion of the chain corresponds to 31–265 (QEHIGTDPSK…QCTQSLAARD (235 aa)). An LRRNT domain is found at 38 to 75 (PSKSPVAPVCPEACSCSPGGKANCSALALPAVPAGLSW). Cystine bridges form between Cys-47-Cys-53 and Cys-51-Cys-61. LRR repeat units lie at residues 76–97 (QVRSLLLDRNRVSTLPPGAFAD), 100–121 (ALLYLVLRENRLRSVHARAFWG), 124–145 (VLQRLDLSSNQLETLSPGTFTP), 148–169 (ALSFLSLAGNRLALLEPSILGP), and 172–194 (LLRVLSLQDNSLSALEAGLLNSL). In terms of domain architecture, LRRCT spans 205-259 (NPWACSCALRPLCTWLRKHPRPTSETETLLCVSPKLQTLNLLTDFPDNAFKQCTQ). Cystine bridges form between Cys-209-Cys-235 and Cys-211-Cys-257. The chain crosses the membrane as a helical span at residues 266-286 (LAVVYALGPASFLASLAICLA). The Cytoplasmic segment spans residues 287–334 (LGSVLTACGARRRRRRTTVRHLIRRQPDPEGPASLEDVGSPTTTAIQA). Residues 312–334 (QPDPEGPASLEDVGSPTTTAIQA) are disordered.

Interacts with KCNMA1.

It is found in the cell membrane. Its subcellular location is the cytoplasm. The protein resides in the cytoskeleton. Functionally, auxiliary protein of the large-conductance, voltage and calcium-activated potassium channel (BK alpha). Required for the conversion of BK alpha channels from a high-voltage to a low-voltage activated channel type in non-excitable cells. These are characterized by negative membrane voltages and constant low levels of calcium. The chain is Leucine-rich repeat-containing protein 26 (Lrrc26) from Rattus norvegicus (Rat).